Consider the following 329-residue polypeptide: UDP-glucose 4-epimerase (329 aa).

Residues 11 to 12 (YV), 31 to 36 (DNFSTG), 51 to 52 (DV), 71 to 75 (FAARS), threonine 115, tyrosine 139, lysine 143, and phenylalanine 167 contribute to the NAD(+) site. Positions 115 and 139 each coordinate substrate. Residue tyrosine 139 is the Proton acceptor of the active site. Residues asparagine 168, 185–186 (HL), 202–204 (FMF), arginine 217, and 277–280 (RAGD) contribute to the substrate site.

The protein belongs to the NAD(P)-dependent epimerase/dehydratase family. In terms of assembly, homodimer. The cofactor is NAD(+).

The catalysed reaction is UDP-alpha-D-glucose = UDP-alpha-D-galactose. It participates in carbohydrate metabolism; galactose metabolism. Involved in the metabolism of galactose. Catalyzes the conversion of UDP-galactose (UDP-Gal) to UDP-glucose (UDP-Glc) through a mechanism involving the transient reduction of NAD. This is UDP-glucose 4-epimerase (galE) from Corynebacterium glutamicum (strain ATCC 13032 / DSM 20300 / JCM 1318 / BCRC 11384 / CCUG 27702 / LMG 3730 / NBRC 12168 / NCIMB 10025 / NRRL B-2784 / 534).